A 122-amino-acid polypeptide reads, in one-letter code: Large ribosomal subunit protein uL14 (122 aa).

The protein belongs to the universal ribosomal protein uL14 family. In terms of assembly, part of the 50S ribosomal subunit. Forms a cluster with proteins L3 and L19. In the 70S ribosome, L14 and L19 interact and together make contacts with the 16S rRNA in bridges B5 and B8.

In terms of biological role, binds to 23S rRNA. Forms part of two intersubunit bridges in the 70S ribosome. The chain is Large ribosomal subunit protein uL14 from Brucella abortus (strain 2308).